Here is a 545-residue protein sequence, read N- to C-terminus: Baeyer-Villiger monooxygenase (545 aa).

Positions 24, 45, 54, 65, 71, and 118 each coordinate FAD.

This sequence belongs to the FAD-binding monooxygenase family. The cofactor is FAD.

In terms of biological role, catalyzes a Baeyer-Villiger oxidation reaction, i.e. the insertion of an oxygen atom into a carbon-carbon bond adjacent to a carbonyl, which converts ketones to esters or lactones using NADPH as an electron donor. Besides cycloalkanones, can use cyclic alpha,beta-unsaturated ketones as substrates, leading to conjugated ene-lactones. Can also act on methylated cycloalkanones and methylated cycloalkenones with high enantioselectivity in some cases. This chain is Baeyer-Villiger monooxygenase, found in Pseudooceanicola batsensis (strain ATCC BAA-863 / DSM 15984 / KCTC 12145 / HTCC2597) (Oceanicola batsensis).